The following is a 178-amino-acid chain: Oligoribonuclease (178 aa).

The Exonuclease domain occupies 7–168; sequence LIWIDLEMTG…DDIRESIAEL (162 aa). Residue Y128 is part of the active site.

This sequence belongs to the oligoribonuclease family.

The protein localises to the cytoplasm. In terms of biological role, 3'-to-5' exoribonuclease specific for small oligoribonucleotides. The chain is Oligoribonuclease from Pseudomonas syringae pv. tomato (strain ATCC BAA-871 / DC3000).